A 164-amino-acid chain; its full sequence is Lipoprotein signal peptidase (164 aa).

4 helical membrane passes run 11-31 (YWVL…AVLS), 41-61 (VIPS…FSFL), 64-84 (QGGW…AYLV), and 92-112 (FATL…GNVI). Catalysis depends on residues aspartate 122 and aspartate 140. The chain crosses the membrane as a helical span at residues 132-152 (FYPAFNIADSFICVGAVLAVL).

It belongs to the peptidase A8 family.

It is found in the cell inner membrane. It carries out the reaction Release of signal peptides from bacterial membrane prolipoproteins. Hydrolyzes -Xaa-Yaa-Zaa-|-(S,diacylglyceryl)Cys-, in which Xaa is hydrophobic (preferably Leu), and Yaa (Ala or Ser) and Zaa (Gly or Ala) have small, neutral side chains.. The protein operates within protein modification; lipoprotein biosynthesis (signal peptide cleavage). This protein specifically catalyzes the removal of signal peptides from prolipoproteins. The polypeptide is Lipoprotein signal peptidase (Neisseria meningitidis serogroup C (strain 053442)).